Reading from the N-terminus, the 79-residue chain is Cell division protein ZapB (79 aa).

Positions 4 to 78 form a coiled coil; it reads EVFEKLEAKV…LQALLGKMEE (75 aa).

This sequence belongs to the ZapB family. In terms of assembly, homodimer. The ends of the coiled-coil dimer bind to each other, forming polymers. Interacts with FtsZ.

The protein localises to the cytoplasm. Non-essential, abundant cell division factor that is required for proper Z-ring formation. It is recruited early to the divisome by direct interaction with FtsZ, stimulating Z-ring assembly and thereby promoting cell division earlier in the cell cycle. Its recruitment to the Z-ring requires functional FtsA or ZipA. The chain is Cell division protein ZapB from Cronobacter sakazakii (strain ATCC BAA-894) (Enterobacter sakazakii).